The following is a 275-amino-acid chain: Elongation factor Ts (275 aa).

The segment at 76-79 (TDFV) is involved in Mg(2+) ion dislocation from EF-Tu.

It belongs to the EF-Ts family.

It localises to the cytoplasm. In terms of biological role, associates with the EF-Tu.GDP complex and induces the exchange of GDP to GTP. It remains bound to the aminoacyl-tRNA.EF-Tu.GTP complex up to the GTP hydrolysis stage on the ribosome. This Rhodococcus jostii (strain RHA1) protein is Elongation factor Ts.